Consider the following 108-residue polypeptide: Large ribosomal subunit protein uL24 (108 aa).

This sequence belongs to the universal ribosomal protein uL24 family. In terms of assembly, part of the 50S ribosomal subunit.

Its function is as follows. One of two assembly initiator proteins, it binds directly to the 5'-end of the 23S rRNA, where it nucleates assembly of the 50S subunit. In terms of biological role, one of the proteins that surrounds the polypeptide exit tunnel on the outside of the subunit. The sequence is that of Large ribosomal subunit protein uL24 from Mycoplasma mycoides subsp. mycoides SC (strain CCUG 32753 / NCTC 10114 / PG1).